The sequence spans 627 residues: DEAD-box ATP-dependent RNA helicase 35A (627 aa).

Composition is skewed to low complexity over residues 1-15 (MAAATASSPATAAAA) and 52-61 (SSSAAEAASD). Disordered regions lie at residues 1 to 23 (MAAATASSPATAAAANSDDEDNY) and 40 to 85 (LRRL…LEAS). Pro residues predominate over residues 62-72 (LPPPPPPPPNQ). The short motif at 182 to 210 (RDFRDLRLPEPMLRKLREKGIVQPTPIQV) is the Q motif element. The 185-residue stretch at 213-397 (LPVVLSGRDM…KSALVKPVIV (185 aa)) folds into the Helicase ATP-binding domain. 226 to 233 (AFTGSGKT) is a binding site for ATP. Positions 345–348 (DEAD) match the DEAD box motif. The 161-residue stretch at 408-568 (DVIQEVEYVK…RIPPVLAELN (161 aa)) folds into the Helicase C-terminal domain. A CCHC-type zinc finger spans residues 584-601 (KGCAYCGGLGHRVTDCPK).

It belongs to the DEAD box helicase family. DDX41 subfamily.

The enzyme catalyses ATP + H2O = ADP + phosphate + H(+). This Oryza sativa subsp. japonica (Rice) protein is DEAD-box ATP-dependent RNA helicase 35A.